A 505-amino-acid polypeptide reads, in one-letter code: Surface lipoprotein assembly modifier 2 (505 aa).

A signal peptide spans 1–19 (MLYFRYGFLVVWCAAGVSA). Residues 23–188 (ADAPAILDDK…RFRKKTEGLT (166 aa)) form an N-terminal domain region. The tract at residues 189-505 (GWRFSGGISP…EVFVSADWRF (317 aa)) is C-terminal probable beta barrel. Transmembrane regions (beta stranded) follow at residues 190 to 200 (WRFSGGISPAV), 232 to 243 (LNYEIEAEKLTP), 248 to 258 (HYLLFRSNIGG), 273 to 283 (FGRAYLGWQYK), 287 to 297 (QTAGILPFYQV), 326 to 335 (VGVQLSHTYR), 340 to 350 (WQFSVALEHYR), 368 to 377 (GFYVSSAKRL), 381 to 391 (ATVFGGWQFVR), 411 to 420 (NGVYAGWAQE), 427 to 437 (LNSRVSASYAR), 456 to 465 (WNVSLALSHD), 472 to 482 (IVPALNYRFGR), and 495 to 505 (SEVFVSADWRF).

Belongs to the Slam family.

Its subcellular location is the cell outer membrane. Functionally, required for correct export to the cell surface of cell outer membrane lipoprotein HpuA heterologously in E.coli (hpuA does not exist in N.meningitidis strain MC58). The polypeptide is Surface lipoprotein assembly modifier 2 (Neisseria meningitidis serogroup B (strain ATCC BAA-335 / MC58)).